The chain runs to 274 residues: Large ribosomal subunit protein uL2 (274 aa).

Positions 223 to 265 (VVMNPVDHPHGGGEGRTSGGRHPVSPWGVPTKGYKTRSNKRTD) are disordered.

This sequence belongs to the universal ribosomal protein uL2 family. In terms of assembly, part of the 50S ribosomal subunit. Forms a bridge to the 30S subunit in the 70S ribosome.

In terms of biological role, one of the primary rRNA binding proteins. Required for association of the 30S and 50S subunits to form the 70S ribosome, for tRNA binding and peptide bond formation. It has been suggested to have peptidyltransferase activity; this is somewhat controversial. Makes several contacts with the 16S rRNA in the 70S ribosome. The protein is Large ribosomal subunit protein uL2 of Vibrio vulnificus (strain CMCP6).